The primary structure comprises 219 residues: Histone H1.4 (219 aa).

Residues 1–15 (MSETAPAAPAAPAPA) are compositionally biased toward low complexity. The segment at 1–41 (MSETAPAAPAAPAPAEKTPIKKKARKAAGGAKRKASGPPVS) is disordered. An N-acetylserine modification is found at S2. At S2 the chain carries Phosphoserine. K17 carries the post-translational modification N6-acetyllysine. T18 carries the phosphothreonine modification. Positions 20-35 (IKKKARKAAGGAKRKA) are enriched in basic residues. N6-acetyllysine; alternate is present on K26. N6-methyllysine; alternate is present on K26. K34 is modified (N6-(beta-hydroxybutyryl)lysine; alternate). N6-succinyllysine; alternate is present on K34. S36 is modified (phosphoserine). The region spanning 36 to 109 (SGPPVSELIT…GASGSFKLNK (74 aa)) is the H15 domain. K52 carries the post-translational modification N6-(beta-hydroxybutyryl)lysine. The residue at position 54 (R54) is a Citrulline. K64, K85, K90, and K106 each carry N6-(beta-hydroxybutyryl)lysine. The segment at 92-219 (TLVQTKGTGA…KPKKTAAKKK (128 aa)) is disordered. The span at 119–140 (KAKKAGAAKAKKPAGAAKKPKK) shows a compositional bias: basic residues. T146 carries the post-translational modification Phosphothreonine. 2 stretches are compositionally biased toward basic residues: residues 149-160 (KSTKKTPKKAKK) and 168-185 (KKAK…KKAP). S150 carries the ADP-ribosylserine modification. Phosphoserine is present on S187. Positions 192–219 (RAVKPKAAKPKTSKPKAAKPKKTAAKKK) are enriched in basic residues.

Belongs to the histone H1/H5 family. H1 histones are progressively phosphorylated during the cell cycle, becoming maximally phosphorylated during late G2 phase and M phase, and being dephosphorylated sharply thereafter. Post-translationally, acetylated at Lys-26. Deacetylated at Lys-26 by SIRT1. In terms of processing, citrullination at Arg-54 (H1R54ci) by PADI4 takes place within the DNA-binding site of H1 and results in its displacement from chromatin and global chromatin decondensation, thereby promoting pluripotency and stem cell maintenance. ADP-ribosylated on Ser-150 in response to DNA damage.

The protein localises to the nucleus. The protein resides in the chromosome. In terms of biological role, histone H1 protein binds to linker DNA between nucleosomes forming the macromolecular structure known as the chromatin fiber. Histones H1 are necessary for the condensation of nucleosome chains into higher-order structured fibers. Also acts as a regulator of individual gene transcription through chromatin remodeling, nucleosome spacing and DNA methylation. The polypeptide is Histone H1.4 (Rattus norvegicus (Rat)).